The following is a 397-amino-acid chain: Tryptophan synthase beta chain (397 aa).

An N6-(pyridoxal phosphate)lysine modification is found at K86.

This sequence belongs to the TrpB family. Tetramer of two alpha and two beta chains. Pyridoxal 5'-phosphate serves as cofactor.

It carries out the reaction (1S,2R)-1-C-(indol-3-yl)glycerol 3-phosphate + L-serine = D-glyceraldehyde 3-phosphate + L-tryptophan + H2O. It functions in the pathway amino-acid biosynthesis; L-tryptophan biosynthesis; L-tryptophan from chorismate: step 5/5. Functionally, the beta subunit is responsible for the synthesis of L-tryptophan from indole and L-serine. In Tolumonas auensis (strain DSM 9187 / NBRC 110442 / TA 4), this protein is Tryptophan synthase beta chain.